We begin with the raw amino-acid sequence, 587 residues long: Trihelix transcription factor GTL1 (587 aa).

Composition is skewed to gly residues over residues 1-10 (MEQGGGGGGN) and 41-54 (GGLGGGGGGGGGGS). The tract at residues 1 to 63 (MEQGGGGGGN…SASSSSGNRW (63 aa)) is disordered. Positions 55-119 (ASSSSGNRWP…KCKEKFENVQ (65 aa)) constitute a Myb-like 1 domain. The Nuclear localization signal 1 signature appears at 96 to 103 (SRKLLELG). Positions 173–194 (SSSPFPVFSQPQPQTQTQPPQT) are enriched in low complexity. Residues 173–264 (SSSPFPVFSQ…RKRGNRGGGG (92 aa)) form a disordered region. A compositionally biased stretch (pro residues) spans 201 to 210 (PTPPPLPLPS). Residues 221 to 232 (SSHSSSTASGMG) are compositionally biased toward low complexity. A compositionally biased stretch (acidic residues) spans 233–242 (SDDDDDDMDV). The stretch at 285–328 (QRSFLEALEKREQERLDREEAWKRQEMARLAREHEVMSQERAAS) forms a coiled coil. Residues 348-435 (QLPPSLSSQP…EQSSLPSSSR (88 aa)) are disordered. Over residues 356–366 (QPPPPYQPPPA) the composition is skewed to pro residues. Composition is skewed to low complexity over residues 379–395 (AQSQSQQPIMAIPQQQI) and 411–434 (QKQQQQPQQEMVMSSEQSSLPSSS). The region spanning 434–492 (SRWPKAEILALINLRSGMEPRYQDNVPKGLLWEEISTSMKRMGYNRNAKRCKEKWENIN) is the Myb-like 2 domain. A Nuclear localization signal 2 motif is present at residues 472 to 479 (MKRMGYNR). Positions 530 to 587 (GGGSSTSGLPQDQKQSPVTAMKPPQEGLVNVQQTHGSASTEEEEPIEESPQGTEKKTL) are disordered. 2 stretches are compositionally biased toward polar residues: residues 538 to 547 (LPQDQKQSPV) and 559 to 568 (NVQQTHGSAS).

Mostly expressed in siliques, and, to a lower extent, in growing root hairs, leaves, stems, and flowers. Present in abaxial epidermal cells, predominantly in guard cells, pavement cells, and meristemoids.

It is found in the nucleus. Functionally, transcription repressor that binds specific DNA sequence such as GT3 box 5'-GGTAAA-3' in the SDD1 promoter. Negative regulator of water use efficiency (WUE) via the promotion of stomatal density and distribution by the transcription repression of SDD1. Regulates the expression of several cell cycle genes and endoreduplication, especially in trichomes where it prevents ploidy-dependent plant cell growth. Regulates negatively root hair growth by directly binding RSL4 promoter and repressing RSL4 expression. This chain is Trihelix transcription factor GTL1, found in Arabidopsis thaliana (Mouse-ear cress).